Reading from the N-terminus, the 220-residue chain is Miraculin (220 aa).

The N-terminal stretch at 1-29 (MKELTMLSLSFFFVSALLAAAANPLLSAA) is a signal peptide. Asn71 is a glycosylation site (N-linked (GlcNAc...) asparagine). 3 disulfides stabilise this stretch: Cys76-Cys121, Cys177-Cys188, and Cys181-Cys184. A glycan (N-linked (GlcNAc...) asparagine) is linked at Asn215.

This sequence belongs to the protease inhibitor I3 (leguminous Kunitz-type inhibitor) family. In terms of assembly, homotetramer; dimer of homodimer. In terms of processing, glycosylated; contains as much as 13,9% of sugars (glucosamine, mannose, galactose, xylose, and fucose). Expressed in fruit pulp after pollination. Not expressed in seeds, stems or leaves.

In terms of biological role, miraculin has the property of modifying a sour taste into a sweet taste. This alteration of taste perception persists for many minutes. The chain is Miraculin from Synsepalum dulcificum (Miracle fruit).